The chain runs to 545 residues: ATP synthase subunit alpha (545 aa).

173-180 is an ATP binding site; it reads GDRQTGKT.

This sequence belongs to the ATPase alpha/beta chains family. In terms of assembly, F-type ATPases have 2 components, CF(1) - the catalytic core - and CF(0) - the membrane proton channel. CF(1) has five subunits: alpha(3), beta(3), gamma(1), delta(1), epsilon(1). CF(0) has three main subunits: a(1), b(2) and c(9-12). The alpha and beta chains form an alternating ring which encloses part of the gamma chain. CF(1) is attached to CF(0) by a central stalk formed by the gamma and epsilon chains, while a peripheral stalk is formed by the delta and b chains.

The protein resides in the cell membrane. The catalysed reaction is ATP + H2O + 4 H(+)(in) = ADP + phosphate + 5 H(+)(out). Produces ATP from ADP in the presence of a proton gradient across the membrane. The alpha chain is a regulatory subunit. In Clavibacter michiganensis subsp. michiganensis (strain NCPPB 382), this protein is ATP synthase subunit alpha.